Here is a 136-residue protein sequence, read N- to C-terminus: Histone H3 (136 aa).

Residues 1–42 (MARTKQTARKSTGGKAPRKQLATKAAAKSAPATGGVKKPHRY) form a disordered region. The residue at position 5 (Lys5) is an N6-methylated lysine. Lys10 carries the N6-acetyllysine; alternate modification. An N6-methylated lysine; alternate modification is found at Lys10. At Ser11 the chain carries Phosphoserine. N6-acetyllysine is present on residues Lys15 and Lys24. Residues 22–33 (ATKAAAKSAPAT) show a composition bias toward low complexity. N6-methylated lysine is present on residues Lys28, Lys37, and Lys80.

It belongs to the histone H3 family. In terms of assembly, the nucleosome is a histone octamer containing two molecules each of H2A, H2B, H3 and H4 assembled in one H3-H4 heterotetramer and two H2A-H2B heterodimers. The octamer wraps approximately 147 bp of DNA. In terms of processing, acetylation is generally linked to gene activation. Methylation at Lys-5 is linked to gene activation. Methylation at Lys-10 is linked to gene repression.

The protein localises to the nucleus. The protein resides in the chromosome. Functionally, core component of nucleosome. Nucleosomes wrap and compact DNA into chromatin, limiting DNA accessibility to the cellular machineries which require DNA as a template. Histones thereby play a central role in transcription regulation, DNA repair, DNA replication and chromosomal stability. DNA accessibility is regulated via a complex set of post-translational modifications of histones, also called histone code, and nucleosome remodeling. In Acropora formosa (Staghorn coral), this protein is Histone H3.